Reading from the N-terminus, the 149-residue chain is Large ribosomal subunit protein bL9 (149 aa).

This sequence belongs to the bacterial ribosomal protein bL9 family.

In terms of biological role, binds to the 23S rRNA. This chain is Large ribosomal subunit protein bL9, found in Xanthomonas campestris pv. campestris (strain 8004).